The following is a 100-amino-acid chain: Small ribosomal subunit protein uS14c (100 aa).

This sequence belongs to the universal ribosomal protein uS14 family. Part of the 30S ribosomal subunit.

It is found in the plastid. The protein resides in the chloroplast. Binds 16S rRNA, required for the assembly of 30S particles. This is Small ribosomal subunit protein uS14c from Porphyra purpurea (Red seaweed).